The chain runs to 486 residues: V-type proton ATPase subunit B1 (486 aa).

At Gly-2 the chain carries N-acetylglycine.

It belongs to the ATPase alpha/beta chains family. As to quaternary structure, V-ATPase is a heteromultimeric enzyme composed of a peripheral catalytic V1 complex (components A to H) attached to an integral membrane V0 proton pore complex (components: a, c, c'', d and e).

Its subcellular location is the vacuole membrane. Its function is as follows. Non-catalytic subunit of the peripheral V1 complex of vacuolar ATPase. V-ATPase is responsible for acidifying a variety of intracellular compartments in eukaryotic cells. In Arabidopsis thaliana (Mouse-ear cress), this protein is V-type proton ATPase subunit B1 (VHA-B1).